The chain runs to 71 residues: Vitellogenin-A1 (71 aa).

The first 15 residues, 1-15 (MRGIILALLLAIAGS), serve as a signal peptide directing secretion. The 48-residue stretch at 24-71 (FSESKTSVYNYEAVILNGFPESGLSRAGIKINCKVEISAYAQRSYFLK) folds into the Vitellogenin domain.

As to expression, produced by the liver, secreted into the blood and then sequestered by receptor mediated endocytosis into growing oocytes, where it is generally cleaved, giving rise to the respective yolk components.

Precursor of the major egg-yolk proteins that are sources of nutrients during early development of oviparous organisms. In Xenopus laevis (African clawed frog), this protein is Vitellogenin-A1.